A 271-amino-acid polypeptide reads, in one-letter code: Formamidopyrimidine-DNA glycosylase (271 aa).

Residue proline 2 is the Schiff-base intermediate with DNA of the active site. Glutamate 3 serves as the catalytic Proton donor. Catalysis depends on lysine 58, which acts as the Proton donor; for beta-elimination activity. Histidine 92, arginine 111, and lysine 152 together coordinate DNA. Residues tyrosine 237 to asparagine 271 form an FPG-type zinc finger. The active-site Proton donor; for delta-elimination activity is the arginine 261.

Belongs to the FPG family. In terms of assembly, monomer. Zn(2+) is required as a cofactor.

It carries out the reaction Hydrolysis of DNA containing ring-opened 7-methylguanine residues, releasing 2,6-diamino-4-hydroxy-5-(N-methyl)formamidopyrimidine.. The catalysed reaction is 2'-deoxyribonucleotide-(2'-deoxyribose 5'-phosphate)-2'-deoxyribonucleotide-DNA = a 3'-end 2'-deoxyribonucleotide-(2,3-dehydro-2,3-deoxyribose 5'-phosphate)-DNA + a 5'-end 5'-phospho-2'-deoxyribonucleoside-DNA + H(+). Its function is as follows. Involved in base excision repair of DNA damaged by oxidation or by mutagenic agents. Acts as a DNA glycosylase that recognizes and removes damaged bases. Has a preference for oxidized purines, such as 7,8-dihydro-8-oxoguanine (8-oxoG). Has AP (apurinic/apyrimidinic) lyase activity and introduces nicks in the DNA strand. Cleaves the DNA backbone by beta-delta elimination to generate a single-strand break at the site of the removed base with both 3'- and 5'-phosphates. This chain is Formamidopyrimidine-DNA glycosylase, found in Wolbachia pipientis wMel.